A 300-amino-acid chain; its full sequence is Geranyl diphosphate 2-C-methyltransferase (300 aa).

The segment at 1–24 is disordered; the sequence is MAAASAPVPGPGGASSTARGRIPA.

It belongs to the geranyl diphosphate 2-C-methyltransferase family. Mg(2+) is required as a cofactor.

It carries out the reaction (2E)-geranyl diphosphate + S-adenosyl-L-methionine = (E)-2-methylgeranyl diphosphate + S-adenosyl-L-homocysteine + H(+). Catalyzes the SAM-dependent methylation of geranyl diphosphate (GPP) to yield (E)-2-methylgeranyl diphosphate (2-MeGPP). In Streptomyces lasalocidi (Streptomyces lasaliensis), this protein is Geranyl diphosphate 2-C-methyltransferase (gdpmt).